The primary structure comprises 341 residues: N-acetyl-gamma-glutamyl-phosphate reductase (341 aa).

Cys145 is a catalytic residue.

It belongs to the NAGSA dehydrogenase family. Type 1 subfamily.

It is found in the cytoplasm. It carries out the reaction N-acetyl-L-glutamate 5-semialdehyde + phosphate + NADP(+) = N-acetyl-L-glutamyl 5-phosphate + NADPH + H(+). The protein operates within amino-acid biosynthesis; L-arginine biosynthesis; N(2)-acetyl-L-ornithine from L-glutamate: step 3/4. Catalyzes the NADPH-dependent reduction of N-acetyl-5-glutamyl phosphate to yield N-acetyl-L-glutamate 5-semialdehyde. The chain is N-acetyl-gamma-glutamyl-phosphate reductase from Methanothrix thermoacetophila (strain DSM 6194 / JCM 14653 / NBRC 101360 / PT) (Methanosaeta thermophila).